The following is a 352-amino-acid chain: Alanine racemase (352 aa).

Residue Lys-33 is the Proton acceptor; specific for D-alanine of the active site. Lys-33 is subject to N6-(pyridoxal phosphate)lysine. A substrate-binding site is contributed by Arg-129. Tyr-250 acts as the Proton acceptor; specific for L-alanine in catalysis. Met-298 contributes to the substrate binding site.

Belongs to the alanine racemase family. Pyridoxal 5'-phosphate serves as cofactor.

It carries out the reaction L-alanine = D-alanine. Its pathway is amino-acid biosynthesis; D-alanine biosynthesis; D-alanine from L-alanine: step 1/1. Functionally, catalyzes the interconversion of L-alanine and D-alanine. May also act on other amino acids. This chain is Alanine racemase (alr), found in Neisseria gonorrhoeae (strain ATCC 700825 / FA 1090).